A 380-amino-acid polypeptide reads, in one-letter code: Chaperone protein DnaJ (380 aa).

Residues 5–69 (DYYEILGVSK…QKRAHYDQFG (65 aa)) form the J domain. A CR-type zinc finger spans residues 135 to 217 (GKETDIEIPS…CGGTGRVKRR (83 aa)). Zn(2+) is bound by residues Cys-148, Cys-151, Cys-165, Cys-168, Cys-191, Cys-194, Cys-205, and Cys-208. 4 CXXCXGXG motif repeats span residues 148 to 155 (CNTCHGTG), 165 to 172 (CPHCHGAG), 191 to 198 (CPYCGGTG), and 205 to 212 (CTTCGGTG).

It belongs to the DnaJ family. As to quaternary structure, homodimer. The cofactor is Zn(2+).

Its subcellular location is the cytoplasm. Functionally, participates actively in the response to hyperosmotic and heat shock by preventing the aggregation of stress-denatured proteins and by disaggregating proteins, also in an autonomous, DnaK-independent fashion. Unfolded proteins bind initially to DnaJ; upon interaction with the DnaJ-bound protein, DnaK hydrolyzes its bound ATP, resulting in the formation of a stable complex. GrpE releases ADP from DnaK; ATP binding to DnaK triggers the release of the substrate protein, thus completing the reaction cycle. Several rounds of ATP-dependent interactions between DnaJ, DnaK and GrpE are required for fully efficient folding. Also involved, together with DnaK and GrpE, in the DNA replication of plasmids through activation of initiation proteins. This is Chaperone protein DnaJ from Geobacillus stearothermophilus (Bacillus stearothermophilus).